The chain runs to 718 residues: MALYQRWRCLRLQGLQACRLHTAVVSTPPRWLAERLGLFEELWAAQVKRLASMAQKEPRTIKISLPGGQKIDAVAWNTTPYQLARQISSTLADTAVAAQVNGEPYDLERPLETDSDLRFLTFDSPEGKAVFWHSSTHVLGAAAEQFLGAVLCRGPSTEYGFYHDFFLGKERTIRGSELPVLERICQELTAAARPFRRLEASRDQLRQLFKDNPFKLHLIEEKVTGPTATVYGCGTLVDLCQGPHLRHTGQIGGLKLLSNSSSLWRSSGAPETLQRVSGISFPTTELLRVWEAWREEAELRDHRRIGKEQELFFFHELSPGSCFFLPRGTRVYNALVAFIRAEYAHRGFSEVKTPTLFSTKLWEQSGHWEHYQEDMFAVQPPGSDRPPSSQSDDSTRHITDTLALKPMNCPAHCLMFAHRPRSWRELPLRLADFGALHRAEASGGLGGLTRLRCFQQDDAHIFCTTDQLEAEIQSCLDFLRSVYAVLGFSFRLALSTRPSGFLGDPCLWDQAEQVLKQALKEFGEPWDLNSGDGAFYGPKIDVHLHDALGRPHQCGTIQLDFQLPLRFDLQYKGQAGALERPVLIHRAVLGSVERLLGVLAESCGGKWPLWLSPFQVVVIPVGSEQEEYAKEAQQSLRAAGLVSDLDADSGLTLSRRIRRAQLAHYNFQFVVGQKEQSKRTVNIRTRDNRRLGEWDLPEAVQRLVELQNTRVPNAEEIF.

Ser52 is subject to Phosphoserine. A TGS domain is found at 55–121 (QKEPRTIKIS…ETDSDLRFLT (67 aa)).

This sequence belongs to the class-II aminoacyl-tRNA synthetase family. Homodimer.

Its subcellular location is the mitochondrion matrix. The enzyme catalyses tRNA(Thr) + L-threonine + ATP = L-threonyl-tRNA(Thr) + AMP + diphosphate + H(+). Catalyzes the attachment of threonine to tRNA(Thr) in a two-step reaction: threonine is first activated by ATP to form Thr-AMP and then transferred to the acceptor end of tRNA(Thr). Also edits incorrectly charged tRNA(Thr) via its editing domain. In Homo sapiens (Human), this protein is Threonine--tRNA ligase, mitochondrial (TARS2).